A 1816-amino-acid chain; its full sequence is Kinesin-like protein KIF1B (1816 aa).

Ser-2 is subject to N-acetylserine. The Kinesin motor domain occupies 5-354 (SVKVAVRVRP…LRYADRAKQI (350 aa)). An ATP-binding site is contributed by 97 to 104 (GQTGAGKS). Positions 270 to 350 (NINKSLTTLG…TLSTLRYADR (81 aa)) are interaction with KIFBP. Coiled coils occupy residues 365–386 (NAKLVRELKEEVTRLKDLLRAQ) and 470–502 (GEEAIERLKESEKIIAELNETWEEKLRKTEAIR). The 57-residue stretch at 556 to 612 (TRVGQADAERRQDIVLSGAHIKEEHCLFRSERSNTGEVIVTLEPCERSETYVNGKRV) folds into the FHA domain. Phosphothreonine is present on residues Thr-647 and Thr-652. Coiled coils occupy residues 668-737 (EKQG…EEEV) and 841-869 (SLDKLKQRLDLMREMYDRAGEVASSAQDD). 5 positions are modified to phosphoserine: Ser-1054, Ser-1057, Ser-1416, Ser-1454, and Ser-1487. Residues 1522 to 1571 (VPKSLSDSLSPSLSSGTLSTSTSISSQISTTTFESAITPSESSGYDSADV) are disordered. Over residues 1525–1553 (SLSDSLSPSLSSGTLSTSTSISSQISTTT) the composition is skewed to low complexity. Polar residues predominate over residues 1554–1566 (FESAITPSESSGY). Residues Ser-1573, Ser-1603, Ser-1610, and Ser-1613 each carry the phosphoserine modification. Low complexity predominate over residues 1620–1637 (SVSSFSSSTLTPSSTCPS). A disordered region spans residues 1620 to 1659 (SVSSFSSSTLTPSSTCPSLVDSRSSSMDQKTPEANSRASS). The span at 1640–1659 (DSRSSSMDQKTPEANSRASS) shows a compositional bias: polar residues. The 98-residue stretch at 1702–1799 (VSKKGYLHFK…WLYAFNPLLA (98 aa)) folds into the PH domain.

This sequence belongs to the TRAFAC class myosin-kinesin ATPase superfamily. Kinesin family. Unc-104 subfamily. In terms of assembly, monomer. Interacts with KIFBP; positively regulates KIF1B microtubule motor activity. Interacts (via C-terminus end of the kinesin-motor domain) with CHP1; the interaction occurs in a calcium-dependent manner. Interacts with MADD (via death domain); links this isoform to Rab3-carrying vesicles in anterograde synaptic vesicle transport. As to expression, expressed in the brain (at protein level).

It is found in the cytoplasm. It localises to the cytoskeleton. The protein localises to the cytoplasmic vesicle. Its subcellular location is the secretory vesicle. The protein resides in the synaptic vesicle membrane. It is found in the mitochondrion. It catalyses the reaction ATP + H2O + a kinesin associated with a microtubule at position (n) = ADP + phosphate a kinesin associated with a microtubule at position (n+1, toward the plus end).. Has a plus-end-directed microtubule motor activity and functions as a motor for transport of vesicles and organelles along microtubules. In terms of biological role, has a plus-end-directed microtubule motor activity and functions as a motor for anterograde synaptic vesicle transport along axonal microtubules from the cell body to the presynapse in neuronal cells. Functions as a downstream effector in a developmental apoptotic pathway that is activated when nerve growth factor (NGF) becomes limiting for neuronal progenitor cells. Functionally, has a plus-end-directed microtubule motor activity and functions as a motor for anterograde transport of mitochondria. The polypeptide is Kinesin-like protein KIF1B (Mus musculus (Mouse)).